Consider the following 306-residue polypeptide: N(1)-aminopropylagmatine ureohydrolase (306 aa).

The Mn(2+) site is built by His-121, Asp-145, His-147, Asp-149, Asp-228, and Asp-230.

Belongs to the arginase family. Requires Mn(2+) as cofactor.

It carries out the reaction N(1)-(3-aminopropyl)agmatine + H2O = urea + spermidine. It functions in the pathway amine and polyamine biosynthesis; spermidine biosynthesis. Ureohydrolase involved in the biosynthesis of spermidine via the carboxyaminopropylagmatine (CAPA) pathway. Catalyzes the conversion of aminopropylagmatine (APA) to spermidine and urea. Is highly specific to APA and incapable of releasing measurable urea from CAPA, agmatine, arginine, guanidine, guanidinobutyrate and guanidinopropionate. The chain is N(1)-aminopropylagmatine ureohydrolase from Synechocystis sp. (strain ATCC 27184 / PCC 6803 / Kazusa).